The primary structure comprises 405 residues: Na(+)-translocating NADH-quinone reductase subunit F (405 aa).

Residues 3–23 (IILGIVMFTVIVLALALMILF) form a helical membrane-spanning segment. One can recognise a 2Fe-2S ferredoxin-type domain in the interval 32-124 (GDITIKVNDE…DMDIEVPEEV (93 aa)). [2Fe-2S] cluster-binding residues include cysteine 67, cysteine 73, cysteine 76, and cysteine 108. Residues 127-267 (VKKWECTVIS…SGPFGEFFAK (141 aa)) enclose the FAD-binding FR-type domain.

The protein belongs to the NqrF family. As to quaternary structure, composed of six subunits; NqrA, NqrB, NqrC, NqrD, NqrE and NqrF. [2Fe-2S] cluster serves as cofactor. The cofactor is FAD.

It is found in the cell inner membrane. It carries out the reaction a ubiquinone + n Na(+)(in) + NADH + H(+) = a ubiquinol + n Na(+)(out) + NAD(+). NQR complex catalyzes the reduction of ubiquinone-1 to ubiquinol by two successive reactions, coupled with the transport of Na(+) ions from the cytoplasm to the periplasm. The first step is catalyzed by NqrF, which accepts electrons from NADH and reduces ubiquinone-1 to ubisemiquinone by a one-electron transfer pathway. The chain is Na(+)-translocating NADH-quinone reductase subunit F from Neisseria gonorrhoeae (strain ATCC 700825 / FA 1090).